The chain runs to 79 residues: D-alanyl carrier protein (79 aa).

Residues 2-79 (AEFKEQVLDI…MVIKKLEEIR (78 aa)) enclose the Carrier domain. An O-(pantetheine 4'-phosphoryl)serine modification is found at Ser37.

It belongs to the DltC family. In terms of processing, 4'-phosphopantetheine is transferred from CoA to a specific serine of apo-DCP.

It localises to the cytoplasm. Its pathway is cell wall biogenesis; lipoteichoic acid biosynthesis. In terms of biological role, carrier protein involved in the D-alanylation of lipoteichoic acid (LTA). The loading of thioester-linked D-alanine onto DltC is catalyzed by D-alanine--D-alanyl carrier protein ligase DltA. The DltC-carried D-alanyl group is further transferred to cell membrane phosphatidylglycerol (PG) by forming an ester bond, probably catalyzed by DltD. D-alanylation of LTA plays an important role in modulating the properties of the cell wall in Gram-positive bacteria, influencing the net charge of the cell wall. This is D-alanyl carrier protein from Bacillus mycoides (strain KBAB4) (Bacillus weihenstephanensis).